The primary structure comprises 377 residues: Flagellar P-ring protein (377 aa).

An N-terminal signal peptide occupies residues 1–30 (MLARFLSSLLKASVTALAVVVAFGFAANFA).

Belongs to the FlgI family. The basal body constitutes a major portion of the flagellar organelle and consists of four rings (L,P,S, and M) mounted on a central rod.

Its subcellular location is the periplasm. It is found in the bacterial flagellum basal body. Its function is as follows. Assembles around the rod to form the L-ring and probably protects the motor/basal body from shearing forces during rotation. This is Flagellar P-ring protein from Cupriavidus pinatubonensis (strain JMP 134 / LMG 1197) (Cupriavidus necator (strain JMP 134)).